The following is a 662-amino-acid chain: UvrABC system protein B (662 aa).

In terms of domain architecture, Helicase ATP-binding spans 31–188 (DNIEGGEKAQ…NDLVDIQFER (158 aa)). 44–51 (GATGTGKT) is an ATP binding site. The short motif at 97 to 120 (YYDYYQPEAYVPSSDTYIEKDSSV) is the Beta-hairpin element. The region spanning 435 to 601 (QIDDLLGEIN…TIKKEIRDLI (167 aa)) is the Helicase C-terminal domain. Positions 626–661 (KDMIKKLEGQMQEAAGLLDFELAAQIRDMILEIKAM) constitute a UVR domain.

Belongs to the UvrB family. Forms a heterotetramer with UvrA during the search for lesions. Interacts with UvrC in an incision complex.

It localises to the cytoplasm. The UvrABC repair system catalyzes the recognition and processing of DNA lesions. A damage recognition complex composed of 2 UvrA and 2 UvrB subunits scans DNA for abnormalities. Upon binding of the UvrA(2)B(2) complex to a putative damaged site, the DNA wraps around one UvrB monomer. DNA wrap is dependent on ATP binding by UvrB and probably causes local melting of the DNA helix, facilitating insertion of UvrB beta-hairpin between the DNA strands. Then UvrB probes one DNA strand for the presence of a lesion. If a lesion is found the UvrA subunits dissociate and the UvrB-DNA preincision complex is formed. This complex is subsequently bound by UvrC and the second UvrB is released. If no lesion is found, the DNA wraps around the other UvrB subunit that will check the other stand for damage. This chain is UvrABC system protein B, found in Streptococcus gordonii (strain Challis / ATCC 35105 / BCRC 15272 / CH1 / DL1 / V288).